A 616-amino-acid chain; its full sequence is Chaperone protein HtpG (616 aa).

An a; substrate-binding region spans residues 1–333 (MKKQFDTEVN…CQDLPLNVSR (333 aa)). Positions 334–542 (EILQQNKILS…SNDPTYQMQK (209 aa)) are b. The c stretch occupies residues 543–616 (IMLSMGQEVK…INEFLEKELL (74 aa)).

The protein belongs to the heat shock protein 90 family. In terms of assembly, homodimer.

The protein resides in the cytoplasm. In terms of biological role, molecular chaperone. Has ATPase activity. This chain is Chaperone protein HtpG, found in Borrelia garinii subsp. bavariensis (strain ATCC BAA-2496 / DSM 23469 / PBi) (Borreliella bavariensis).